Here is a 226-residue protein sequence, read N- to C-terminus: Thiamine-phosphate synthase (226 aa).

4-amino-2-methyl-5-(diphosphooxymethyl)pyrimidine is bound by residues 46–50 and Asn-87; that span reads QLRDK. Residues Asp-88 and Asp-107 each contribute to the Mg(2+) site. Ser-126 is a binding site for 4-amino-2-methyl-5-(diphosphooxymethyl)pyrimidine. 152–154 provides a ligand contact to 2-[(2R,5Z)-2-carboxy-4-methylthiazol-5(2H)-ylidene]ethyl phosphate; sequence TPT. Lys-155 lines the 4-amino-2-methyl-5-(diphosphooxymethyl)pyrimidine pocket. Residue Gly-183 participates in 2-[(2R,5Z)-2-carboxy-4-methylthiazol-5(2H)-ylidene]ethyl phosphate binding.

Belongs to the thiamine-phosphate synthase family. Mg(2+) serves as cofactor.

It carries out the reaction 2-[(2R,5Z)-2-carboxy-4-methylthiazol-5(2H)-ylidene]ethyl phosphate + 4-amino-2-methyl-5-(diphosphooxymethyl)pyrimidine + 2 H(+) = thiamine phosphate + CO2 + diphosphate. It catalyses the reaction 2-(2-carboxy-4-methylthiazol-5-yl)ethyl phosphate + 4-amino-2-methyl-5-(diphosphooxymethyl)pyrimidine + 2 H(+) = thiamine phosphate + CO2 + diphosphate. The enzyme catalyses 4-methyl-5-(2-phosphooxyethyl)-thiazole + 4-amino-2-methyl-5-(diphosphooxymethyl)pyrimidine + H(+) = thiamine phosphate + diphosphate. Its pathway is cofactor biosynthesis; thiamine diphosphate biosynthesis; thiamine phosphate from 4-amino-2-methyl-5-diphosphomethylpyrimidine and 4-methyl-5-(2-phosphoethyl)-thiazole: step 1/1. Its function is as follows. Condenses 4-methyl-5-(beta-hydroxyethyl)thiazole monophosphate (THZ-P) and 2-methyl-4-amino-5-hydroxymethyl pyrimidine pyrophosphate (HMP-PP) to form thiamine monophosphate (TMP). This Mycobacterium sp. (strain KMS) protein is Thiamine-phosphate synthase.